The primary structure comprises 100 residues: Putative pterin-4-alpha-carbinolamine dehydratase (100 aa).

The protein belongs to the pterin-4-alpha-carbinolamine dehydratase family.

The catalysed reaction is (4aS,6R)-4a-hydroxy-L-erythro-5,6,7,8-tetrahydrobiopterin = (6R)-L-erythro-6,7-dihydrobiopterin + H2O. This Bradyrhizobium diazoefficiens (strain JCM 10833 / BCRC 13528 / IAM 13628 / NBRC 14792 / USDA 110) protein is Putative pterin-4-alpha-carbinolamine dehydratase.